A 70-amino-acid polypeptide reads, in one-letter code: Putative membrane protein insertion efficiency factor (70 aa).

It belongs to the UPF0161 family.

Its subcellular location is the cell membrane. In terms of biological role, could be involved in insertion of integral membrane proteins into the membrane. This is Putative membrane protein insertion efficiency factor from Clostridium novyi (strain NT).